Here is a 141-residue protein sequence, read N- to C-terminus: Hemoglobin subunit alpha (141 aa).

The region spanning 1 to 141 is the Globin domain; it reads VLSAADKAHV…VSTVLTSKYR (141 aa). Phosphoserine is present on S3. Residues K7 and K11 each carry the N6-succinyllysine modification. K16 is modified (N6-acetyllysine; alternate). N6-succinyllysine; alternate is present on K16. The residue at position 24 (Y24) is a Phosphotyrosine. S35 carries the post-translational modification Phosphoserine. K40 bears the N6-succinyllysine mark. S49 carries the post-translational modification Phosphoserine. Residue H58 participates in O2 binding. Residue H87 coordinates heme b. Position 108 is a phosphothreonine (T108). Position 124 is a phosphoserine (S124). A phosphothreonine mark is found at T134 and T137. S138 is modified (phosphoserine).

The protein belongs to the globin family. In terms of assembly, heterotetramer of two alpha chains and two beta chains. Red blood cells.

Its function is as follows. Involved in oxygen transport from the lung to the various peripheral tissues. In terms of biological role, hemopressin acts as an antagonist peptide of the cannabinoid receptor CNR1. Hemopressin-binding efficiently blocks cannabinoid receptor CNR1 and subsequent signaling. This Bradypus tridactylus (Pale-throated three-toed sloth) protein is Hemoglobin subunit alpha (HBA).